A 126-amino-acid polypeptide reads, in one-letter code: Protein ApaG (126 aa).

The ApaG domain occupies 2–126 (DVSLPCIKIQ…FRLAVPHVLN (125 aa)).

In Vibrio cholerae serotype O1 (strain ATCC 39541 / Classical Ogawa 395 / O395), this protein is Protein ApaG.